We begin with the raw amino-acid sequence, 165 residues long: Lipoprotein signal peptidase (165 aa).

5 consecutive transmembrane segments (helical) span residues 10–30 (LKWL…KYWV), 42–62 (VLPG…GLFT), 71–91 (LFVW…YKLI), 105–125 (IGGA…VDFI), and 133–153 (HWPT…IVTI). Residues Asp123 and Asp141 contribute to the active site.

Belongs to the peptidase A8 family.

The protein localises to the cell inner membrane. It carries out the reaction Release of signal peptides from bacterial membrane prolipoproteins. Hydrolyzes -Xaa-Yaa-Zaa-|-(S,diacylglyceryl)Cys-, in which Xaa is hydrophobic (preferably Leu), and Yaa (Ala or Ser) and Zaa (Gly or Ala) have small, neutral side chains.. Its pathway is protein modification; lipoprotein biosynthesis (signal peptide cleavage). In terms of biological role, this protein specifically catalyzes the removal of signal peptides from prolipoproteins. This chain is Lipoprotein signal peptidase, found in Blochmanniella pennsylvanica (strain BPEN).